Here is a 124-residue protein sequence, read N- to C-terminus: Chemotaxis protein CheY1 (124 aa).

The region spanning 2–120 (KLLVVDDSST…VLKEKLEVVL (119 aa)) is the Response regulatory domain. Mg(2+) is bound by residues aspartate 7, aspartate 8, aspartate 53, and asparagine 55. Aspartate 53 is subject to 4-aspartylphosphate.

As to quaternary structure, interacts (when phosphorylated) with FliM. It depends on Mg(2+) as a cofactor. Post-translationally, phosphorylated by CheAY. Dephosphorylated (inactivated) by CheZ.

The protein resides in the cytoplasm. Its function is as follows. Chemotactic response regulator protein that modulates the rotation direction of bacterial flagellar motors. Plays an important role in the colonization and infection of Helicobacter pylori. Upon phosphorylation by CheA, interacts with the flagellar motor protein FliM to cause clockwise flagellar rotation and bacterial reversals, as opposed to straight swimming when CheY1 is not phosphorylated. The protein is Chemotaxis protein CheY1 of Helicobacter pylori (strain ATCC 700392 / 26695) (Campylobacter pylori).